A 148-amino-acid chain; its full sequence is MVRFIFVSFGLLVVFLSLSGIGAGFCCPWGWSSYDEHCYQVFQQKMNWEDAEKFCIQQHKGSHLVSFHSSEEVDLVTSKTFPILKHDFVWMGLSNVWNECTREWSDGTKLDYKAWSGQSDCIVSKTTDNQWLSMDCSSKRYIVCKFQA.

A signal peptide spans 1-23 (MVRFIFVSFGLLVVFLSLSGIGA). 3 disulfide bridges follow: C27–C38, C55–C144, and C121–C136. A C-type lectin domain is found at 34-145 (YDEHCYQVFQ…CSSKRYIVCK (112 aa)).

This sequence belongs to the snaclec family. In terms of assembly, tetramer of 4 heterodimers of alpha and beta subunits; disulfide-linked. Expressed by the venom gland.

Its subcellular location is the secreted. In terms of biological role, snaclec that strongly induces platelet aggregation, in a dose-dependent manner. In Protobothrops jerdonii (Jerdon's pitviper), this protein is Snaclec jerdonuxin subunit beta.